Here is a 648-residue protein sequence, read N- to C-terminus: Biosynthetic arginine decarboxylase (648 aa).

An N6-(pyridoxal phosphate)lysine modification is found at Lys109. Substrate is bound at residue 291 to 301 (IDVGGGLGIDF).

The protein belongs to the Orn/Lys/Arg decarboxylase class-II family. SpeA subfamily. Requires Mg(2+) as cofactor. Pyridoxal 5'-phosphate serves as cofactor.

The catalysed reaction is L-arginine + H(+) = agmatine + CO2. It functions in the pathway amine and polyamine biosynthesis; agmatine biosynthesis; agmatine from L-arginine: step 1/1. Its function is as follows. Catalyzes the biosynthesis of agmatine from arginine. This Prochlorococcus marinus (strain MIT 9301) protein is Biosynthetic arginine decarboxylase.